A 485-amino-acid polypeptide reads, in one-letter code: UDP-N-acetylmuramate--L-alanine ligase (485 aa).

112-118 (GTHGKTT) provides a ligand contact to ATP.

The protein belongs to the MurCDEF family.

The protein localises to the cytoplasm. The enzyme catalyses UDP-N-acetyl-alpha-D-muramate + L-alanine + ATP = UDP-N-acetyl-alpha-D-muramoyl-L-alanine + ADP + phosphate + H(+). It participates in cell wall biogenesis; peptidoglycan biosynthesis. In terms of biological role, cell wall formation. The protein is UDP-N-acetylmuramate--L-alanine ligase of Variovorax paradoxus (strain S110).